A 520-amino-acid polypeptide reads, in one-letter code: Cyclic AMP-responsive element-binding protein 3-like protein 2 (520 aa).

The Cytoplasmic segment spans residues M1–C379. S93 bears the Phosphoserine mark. Residue K178 forms a Glycyl lysine isopeptide (Lys-Gly) (interchain with G-Cter in SUMO2) linkage. S191 is subject to Phosphoserine. The segment at A195–L264 is disordered. Composition is skewed to low complexity over residues S208–P220 and S234–P255. The bZIP domain occupies A294–L357. Positions K296–K325 are basic motif. The leucine-zipper stretch occupies residues L336–L357. The helical; Signal-anchor for type II membrane protein transmembrane segment at L380–P400 threads the bilayer. At Y401–F520 the chain is on the lumenal side. Positions R427–L430 match the S1P recognition motif. 3 N-linked (GlcNAc...) asparagine glycosylation sites follow: N480, N504, and N517.

It belongs to the bZIP family. ATF subfamily. As to quaternary structure, binds DNA as a dimer. In terms of processing, upon ER stress, translocated to the Golgi apparatus, where it is processed by regulated intramembrane proteolysis (RIP) to release the cytosol-facing N-terminal transcription factor domain. The cleavage is performed sequentially by site-1 and site-2 proteases (S1P/MBTPS1 and S2P/MBTPS2). N-glycosylated. Post-translationally, ubiquitinated by HRD1/SYVN1; undergoes 'Lys-48'-linked ubiquitination, followed by rapid proteasomal degradation under normal conditions. Upon ER stress, SYVN1 E3 ubiquitin-protein ligase dissociates from its substrate, ubiquitination does not occur and CREB3L2 is stabilized. As to expression, widely expressed with highest levels in placenta, lung, spleen and intestine, and lowest levels in heart, brain, skeletal muscle, thymus, colon and leukocytes. In fetal tissues, the weakest expression is detected in brain and heart.

The protein resides in the endoplasmic reticulum membrane. Its subcellular location is the nucleus. In terms of biological role, transcription factor involved in unfolded protein response (UPR). In the absence of endoplasmic reticulum (ER) stress, inserted into ER membranes, with N-terminal DNA-binding and transcription activation domains oriented toward the cytosolic face of the membrane. In response to ER stress, transported to the Golgi, where it is cleaved in a site-specific manner by resident proteases S1P/MBTPS1 and S2P/MBTPS2. The released N-terminal cytosolic domain is translocated to the nucleus to effect transcription of specific target genes. Plays a critical role in chondrogenesis by activating the transcription of SEC23A, which promotes the transport and secretion of cartilage matrix proteins, and possibly that of ER biogenesis-related genes. In a neuroblastoma cell line, protects cells from ER stress-induced death. In vitro activates transcription of target genes via direct binding to the CRE site. The polypeptide is Cyclic AMP-responsive element-binding protein 3-like protein 2 (CREB3L2) (Homo sapiens (Human)).